The chain runs to 138 residues: Flagellar basal body rod protein FlgB (138 aa).

Belongs to the flagella basal body rod proteins family. As to quaternary structure, the basal body constitutes a major portion of the flagellar organelle and consists of a number of rings mounted on a central rod. In Gram-negative bacteria, at least four rings, L, P, S and M are present, whereas Gram-positive bacteria lack the L and P rings. The rod consists of about 26 subunits of FlgG in the distal portion, and FlgB, FlgC and FlgF build up the proximal portion of the rod with about 6 subunits each. Rod assembly occurs by export via the flagellum-specific pathway of its constituent proteins and by their incorporation into the rod structure in the probable order of FlgB, FlgC, FlgF and FlgG. Another protein, FliE, also assembles onto the stable rod structure.

The protein localises to the bacterial flagellum basal body. Structural component of flagellum, the bacterial motility apparatus. Part of the rod structure of flagellar basal body. The chain is Flagellar basal body rod protein FlgB (flgB) from Escherichia coli (strain K12).